We begin with the raw amino-acid sequence, 207 residues long: Ribosomal RNA small subunit methyltransferase G (207 aa).

Residues G73, L78, 124 to 125 (VE), and R139 contribute to the S-adenosyl-L-methionine site.

The protein belongs to the methyltransferase superfamily. RNA methyltransferase RsmG family.

It localises to the cytoplasm. The enzyme catalyses guanosine(527) in 16S rRNA + S-adenosyl-L-methionine = N(7)-methylguanosine(527) in 16S rRNA + S-adenosyl-L-homocysteine. In terms of biological role, specifically methylates the N7 position of guanine in position 527 of 16S rRNA. This Shigella dysenteriae serotype 1 (strain Sd197) protein is Ribosomal RNA small subunit methyltransferase G.